Here is a 338-residue protein sequence, read N- to C-terminus: Tetraacyldisaccharide 4'-kinase (338 aa).

53–60 (TVGGSGKT) contributes to the ATP binding site.

It belongs to the LpxK family.

It carries out the reaction a lipid A disaccharide + ATP = a lipid IVA + ADP + H(+). It functions in the pathway glycolipid biosynthesis; lipid IV(A) biosynthesis; lipid IV(A) from (3R)-3-hydroxytetradecanoyl-[acyl-carrier-protein] and UDP-N-acetyl-alpha-D-glucosamine: step 6/6. In terms of biological role, transfers the gamma-phosphate of ATP to the 4'-position of a tetraacyldisaccharide 1-phosphate intermediate (termed DS-1-P) to form tetraacyldisaccharide 1,4'-bis-phosphate (lipid IVA). In Azorhizobium caulinodans (strain ATCC 43989 / DSM 5975 / JCM 20966 / LMG 6465 / NBRC 14845 / NCIMB 13405 / ORS 571), this protein is Tetraacyldisaccharide 4'-kinase.